Consider the following 239-residue polypeptide: Geranylgeranylglyceryl phosphate synthase (239 aa).

Positions 18 and 45 each coordinate Mg(2+). Residues 166–172, 197–198, and 219–220 each bind sn-glycerol 1-phosphate; these read YLEAGSG, GG, and GT.

It belongs to the GGGP/HepGP synthase family. Group II subfamily. Mg(2+) serves as cofactor.

Its subcellular location is the cytoplasm. The catalysed reaction is sn-glycerol 1-phosphate + (2E,6E,10E)-geranylgeranyl diphosphate = sn-3-O-(geranylgeranyl)glycerol 1-phosphate + diphosphate. Its pathway is membrane lipid metabolism; glycerophospholipid metabolism. Its function is as follows. Prenyltransferase that catalyzes the transfer of the geranylgeranyl moiety of geranylgeranyl diphosphate (GGPP) to the C3 hydroxyl of sn-glycerol-1-phosphate (G1P). This reaction is the first ether-bond-formation step in the biosynthesis of archaeal membrane lipids. The polypeptide is Geranylgeranylglyceryl phosphate synthase (Pyrobaculum islandicum (strain DSM 4184 / JCM 9189 / GEO3)).